Reading from the N-terminus, the 407-residue chain is Phosphopentomutase (407 aa).

Mn(2+) contacts are provided by Asp-10, Asp-306, His-311, Asp-347, His-348, and His-359.

The protein belongs to the phosphopentomutase family. Mn(2+) is required as a cofactor.

The protein localises to the cytoplasm. The enzyme catalyses 2-deoxy-alpha-D-ribose 1-phosphate = 2-deoxy-D-ribose 5-phosphate. The catalysed reaction is alpha-D-ribose 1-phosphate = D-ribose 5-phosphate. Its pathway is carbohydrate degradation; 2-deoxy-D-ribose 1-phosphate degradation; D-glyceraldehyde 3-phosphate and acetaldehyde from 2-deoxy-alpha-D-ribose 1-phosphate: step 1/2. Functionally, isomerase that catalyzes the conversion of deoxy-ribose 1-phosphate (dRib-1-P) and ribose 1-phosphate (Rib-1-P) to deoxy-ribose 5-phosphate (dRib-5-P) and ribose 5-phosphate (Rib-5-P), respectively. In Salmonella schwarzengrund (strain CVM19633), this protein is Phosphopentomutase.